A 133-amino-acid chain; its full sequence is Profilin (133 aa).

The protein belongs to the profilin family. In terms of assembly, interacts with host TPM1. Interacts with protein A25.

Its subcellular location is the host cytoplasm. Functionally, participates in either intracellular transport of viral proteins or intercellular spread of the virus. Cellular profilins modulate actin filament dynamics (polymerization and depolymerization) via direct binding to actin through an actin-binding domain as well as by modulation of other actin-binding proteins. In contrast to cellular homologs, the poxvirus profilins seem to bind actin only weakly. In Variola virus (isolate Human/India/Ind3/1967) (VARV), this protein is Profilin (OPG171).